A 1187-amino-acid chain; its full sequence is ATP-dependent DNA helicase MER3 (1187 aa).

Positions 1–41 (MKTKFDRLGTGKRSRPSPNNIDFNDQSATFKRNKKNSRQPS) are disordered. A compositionally biased stretch (polar residues) spans 16 to 30 (PSPNNIDFNDQSATF). Residues 148-322 (PSIYESNENC…WLKTNNELPA (175 aa)) enclose the Helicase ATP-binding domain. Position 161–168 (161–168 (SPTGSGKT)) interacts with ATP. The DEIH box motif lies at 268 to 271 (DEIH). The Helicase C-terminal domain maps to 360-542 (KLIEIIEKHA…NLIEHLAAET (183 aa)). The region spanning 616–922 (STAYGNAMTR…PKLEKIEFSI (307 aa)) is the SEC63 domain. The segment at 1039-1054 (CFHSCKDKTQCRHLCC) adopts a C4-type zinc-finger fold. Residues 1146–1187 (NCPEIIPIDLESSDSYSSNTAASSISDPNGDLDFLGSDIEFE) form a disordered region. A compositionally biased stretch (low complexity) spans 1158–1171 (SDSYSSNTAASSIS).

This sequence belongs to the helicase family. SKI2 subfamily. As to quaternary structure, oligomerizes. A divalent metal cation serves as cofactor. It depends on Zn(2+) as a cofactor.

It localises to the nucleus. It catalyses the reaction Couples ATP hydrolysis with the unwinding of duplex DNA by translocating in the 3'-5' direction.. The catalysed reaction is ATP + H2O = ADP + phosphate + H(+). In terms of biological role, DNA-dependent ATPase and 3'-5' DNA helicase. Required in the control of double strand break transition and crossover during meiosis. ATPase is slightly better stimulated by single-stranded (ss) than double-stranded (ds)DNA. Unwinds Holliday junction (HJ) DNA to Y-DNA and to ssDNA. Efficient unwinding requires 6 nucleotides of 3'-ssDNA; seems to initiate unwinding from blunt ends when they open slightly. Binds HJ, dsDNA, ssDNA and 3'- and 5-overhang DNA. This Saccharomyces cerevisiae (strain ATCC 204508 / S288c) (Baker's yeast) protein is ATP-dependent DNA helicase MER3.